The following is a 262-amino-acid chain: WW domain-binding protein 2 (262 aa).

A GRAM domain is found at 1–84 (MALNKNHSEG…YLMKDCEVKQ (84 aa)). Phosphotyrosine is present on Tyr192. A PPxY motif 1 motif is present at residues 196 to 200 (PPPPY). Over residues 197–206 (PPPYPGPMEP) the composition is skewed to pro residues. The interval 197–262 (PPPYPGPMEP…YYPPEDKKTQ (66 aa)) is disordered. The span at 219–231 (AAEAKAAEAAASA) shows a compositional bias: low complexity. Tyr232 carries the phosphotyrosine modification. The span at 246–255 (SQPPPPPYYP) shows a compositional bias: pro residues. Residues 249–253 (PPPPY) carry the PPxY motif 2 motif.

Binds to the WW domain of YAP1, WWP1 and WWP2. Interacts with NEDD4. Interacts with ESR1 and UBE3A. In terms of processing, phosphorylated in repsonse to EGF as well as estrogen and progesterone hormones. Tyr-192 and Tyr-232 are phosphorylated by YES and SRC inducing nuclear translocation.

The protein resides in the cytoplasm. It localises to the nucleus. Functionally, acts as a transcriptional coactivator of estrogen and progesterone receptors (ESR1 and PGR) upon hormone activation. In presence of estrogen, binds to ESR1-responsive promoters. Synergizes with YAP1 to enhance PGR activity. Modulates expression of post-synaptic scaffolding proteins via regulation of ESR1, ESR2 and PGR. In Rattus norvegicus (Rat), this protein is WW domain-binding protein 2 (Wbp2).